The sequence spans 195 residues: Endoribonuclease YbeY (195 aa).

Histidine 152, histidine 156, and histidine 162 together coordinate Zn(2+).

This sequence belongs to the endoribonuclease YbeY family. Zn(2+) serves as cofactor.

It is found in the cytoplasm. Functionally, single strand-specific metallo-endoribonuclease involved in late-stage 70S ribosome quality control and in maturation of the 3' terminus of the 16S rRNA. The chain is Endoribonuclease YbeY from Rhodopseudomonas palustris (strain HaA2).